The following is a 374-amino-acid chain: Putative glutamate--cysteine ligase 2 (374 aa).

Belongs to the glutamate--cysteine ligase type 2 family. YbdK subfamily.

It carries out the reaction L-cysteine + L-glutamate + ATP = gamma-L-glutamyl-L-cysteine + ADP + phosphate + H(+). In terms of biological role, ATP-dependent carboxylate-amine ligase which exhibits weak glutamate--cysteine ligase activity. In Verminephrobacter eiseniae (strain EF01-2), this protein is Putative glutamate--cysteine ligase 2.